Consider the following 307-residue polypeptide: Type 2A encapsulin shell protein (307 aa).

The protein belongs to the encapsulin family. Family 2A subfamily. In terms of assembly, homooligomeric. The encapsulin nanocompartment is formed by 60 subunits; monomers form pentamers which assemble to form shells. There are 12 charged pores where the pentamers meet as well as 3-fold axis channels and dimer channels.

The protein resides in the encapsulin nanocompartment. Shell component of a type 2A encapsulin nanocompartment. Forms encapsulin nanocompartments about 24 nm in diameter from 60 monomers. Probably encapsulates at least cysteine desulfurase (CyD) and allows passage of cysteine into its interior, probably involved in sulfur metabolism. The protein is Type 2A encapsulin shell protein of Mycobacterium avium.